Reading from the N-terminus, the 292-residue chain is ATP synthase gamma chain (292 aa).

Belongs to the ATPase gamma chain family. F-type ATPases have 2 components, CF(1) - the catalytic core - and CF(0) - the membrane proton channel. CF(1) has five subunits: alpha(3), beta(3), gamma(1), delta(1), epsilon(1). CF(0) has three main subunits: a, b and c.

The protein resides in the cell inner membrane. In terms of biological role, produces ATP from ADP in the presence of a proton gradient across the membrane. The gamma chain is believed to be important in regulating ATPase activity and the flow of protons through the CF(0) complex. The protein is ATP synthase gamma chain of Nautilia profundicola (strain ATCC BAA-1463 / DSM 18972 / AmH).